A 411-amino-acid polypeptide reads, in one-letter code: O-glucosyltransferase rumi (411 aa).

An N-terminal signal peptide occupies residues 1–20; it reads MLINHLIVVLLISLVGTGGA. Intrachain disulfides connect Cys-64/Cys-75, Cys-73/Cys-378, Cys-120/Cys-126, and Cys-282/Cys-305. The active-site Proton donor/acceptor is the Asp-151. The tract at residues 192 to 197 is interaction with the consensus sequence C-X-S-X-[PA]-C in peptide substrates; sequence ATKLHP. UDP-alpha-D-glucose contacts are provided by residues 229–233, Arg-237, 276–278, and 294–298; these read RGSRT, VSF, and AASFR. The Prevents secretion from ER signature appears at 408-411; it reads KDEL.

The protein belongs to the glycosyltransferase 90 family.

The protein resides in the endoplasmic reticulum lumen. It functions in the pathway protein modification; protein glycosylation. In terms of biological role, protein O-glucosyltransferase. Catalyzes the reaction that attaches glucose through an O-glycosidic linkage to a conserved serine residue found in the consensus sequence C-X-S-X-[PA]-C in epidermal growth factor-like repeats. Regulates Notch signaling by glucosylating Notch in the ER, glucosylation is required for the correct folding and cleavage of Notch. This is O-glucosyltransferase rumi from Drosophila melanogaster (Fruit fly).